Here is a 353-residue protein sequence, read N- to C-terminus: Protein U67 (353 aa).

The protein belongs to the herpesviridae UL95 family.

This chain is Protein U67 (U67), found in Human herpesvirus 6A (strain Uganda-1102) (HHV-6 variant A).